We begin with the raw amino-acid sequence, 90 residues long: MKKKGGRKIFGFMVKEEKEENWGSVEFQVFSFTNKIRRLASHLELHKKDFSSERGLRRLLGKRQRLLAYLAKKNRVRYKKLISQLDIRER.

It belongs to the universal ribosomal protein uS15 family. Part of the 30S ribosomal subunit.

The protein resides in the plastid. Its subcellular location is the chloroplast. In Oryza nivara (Indian wild rice), this protein is Small ribosomal subunit protein uS15c (rps15-A).